Consider the following 495-residue polypeptide: Histidine--tRNA ligase (495 aa).

The span at 1-10 (MTTDSEQPNT) shows a compositional bias: polar residues. Residues 1–24 (MTTDSEQPNTDFRPEARAPRGFAD) are disordered. Basic and acidic residues predominate over residues 12-24 (FRPEARAPRGFAD).

The protein belongs to the class-II aminoacyl-tRNA synthetase family. Homodimer.

The protein resides in the cytoplasm. The catalysed reaction is tRNA(His) + L-histidine + ATP = L-histidyl-tRNA(His) + AMP + diphosphate + H(+). The chain is Histidine--tRNA ligase (hisS) from Caulobacter vibrioides (strain ATCC 19089 / CIP 103742 / CB 15) (Caulobacter crescentus).